Reading from the N-terminus, the 77-residue chain is PTS system N-acetylglucosamine-specific EIIB component (77 aa).

Residues 2–77 (ASKAEKIVAG…PIAAEIEDMM (76 aa)) form the PTS EIIB type-1 domain. Cysteine 24 (phosphocysteine intermediate; for EIIB activity) is an active-site residue.

The catalysed reaction is N(pros)-phospho-L-histidyl-[protein] + N-acetyl-D-glucosamine(out) = N-acetyl-D-glucosamine 6-phosphate(in) + L-histidyl-[protein]. The phosphoenolpyruvate-dependent sugar phosphotransferase system (sugar PTS), a major carbohydrate active transport system, catalyzes the phosphorylation of incoming sugar substrates concomitantly with their translocation across the cell membrane. This system is involved in N-acetylglucosamine (GlcNAc) transport. The protein is PTS system N-acetylglucosamine-specific EIIB component of Streptomyces coelicolor (strain ATCC BAA-471 / A3(2) / M145).